A 155-amino-acid chain; its full sequence is Cytochrome c-type biogenesis protein CcmE (155 aa).

Residues 1–8 (MNPIRKKR) lie on the Cytoplasmic side of the membrane. Residues 9-29 (LYWILALLCGVSIAMALALSA) traverse the membrane as a helical; Signal-anchor for type II membrane protein segment. The Periplasmic portion of the chain corresponds to 30-155 (LQENINLFYT…PKRVKQESTR (126 aa)). Heme-binding residues include H124 and Y128.

The protein belongs to the CcmE/CycJ family.

It localises to the cell inner membrane. Heme chaperone required for the biogenesis of c-type cytochromes. Transiently binds heme delivered by CcmC and transfers the heme to apo-cytochromes in a process facilitated by CcmF and CcmH. In Janthinobacterium sp. (strain Marseille) (Minibacterium massiliensis), this protein is Cytochrome c-type biogenesis protein CcmE.